We begin with the raw amino-acid sequence, 313 residues long: Protein OPG185 (313 aa).

Residues 1–16 form the signal peptide; it reads MTQLPILLLLISLVYA. At 17–274 the chain is on the virion surface side; sequence TPSPQTSKKI…TSISNYKTKD (258 aa). Residues asparagine 37, asparagine 69, asparagine 112, asparagine 159, asparagine 194, and asparagine 252 are each glycosylated (N-linked (GlcNAc...) asparagine; by host). A helical membrane pass occupies residues 275-295; it reads FVEIFGITTLIILSAVAIFCI. The Intravirion portion of the chain corresponds to 296–313; it reads TYYICNKHPRKYKTENKV.

This sequence belongs to the orthopoxvirus OPG185 family. Heterodimerizes with OPG040. The heterodimer OPG185-OPG040 interacts with components of the entry fusion complex OPG143 and OPG094. Heterodimer with C3/VPC protein; disulfide-linked. Post-translationally, glycosylated; contains phosphate and sulfate-substituted glycans. O-glycosylation is required for hemagglutination and hemadsorption activities of infected cell membranes.

The protein resides in the virion membrane. It is found in the host membrane. Its function is as follows. Prevents cell to cell fusion by interacting with and directing the viral OPG040 protein on the host plasma membrane. The OPG185-OPG040 complex associates with components of the entry fusion complex (EFC) presumably to avoid superinfection and syncytium formation. Via its interaction with C3/VCP protein, protects the infected cell and probably also the extracellular enveloped virus from complement attack. In Monkeypox virus, this protein is Protein OPG185 (OPG185).